A 188-amino-acid polypeptide reads, in one-letter code: HGPRTase-like protein 1 (188 aa).

The protein belongs to the purine/pyrimidine phosphoribosyltransferase family. Archaeal HPRT subfamily.

Its function is as follows. May catalyze a purine salvage reaction, the substrate is unknown. This Haloquadratum walsbyi (strain DSM 16854 / JCM 12705 / C23) protein is HGPRTase-like protein 1.